Consider the following 283-residue polypeptide: ATP phosphoribosyltransferase (283 aa).

Belongs to the ATP phosphoribosyltransferase family. Long subfamily. In terms of assembly, equilibrium between an active dimeric form, an inactive hexameric form and higher aggregates. Interconversion between the various forms is largely reversible and is influenced by the natural substrates and inhibitors of the enzyme. Mg(2+) serves as cofactor.

Its subcellular location is the cytoplasm. It catalyses the reaction 1-(5-phospho-beta-D-ribosyl)-ATP + diphosphate = 5-phospho-alpha-D-ribose 1-diphosphate + ATP. The protein operates within amino-acid biosynthesis; L-histidine biosynthesis; L-histidine from 5-phospho-alpha-D-ribose 1-diphosphate: step 1/9. Feedback inhibited by histidine. Its function is as follows. Catalyzes the condensation of ATP and 5-phosphoribose 1-diphosphate to form N'-(5'-phosphoribosyl)-ATP (PR-ATP). Has a crucial role in the pathway because the rate of histidine biosynthesis seems to be controlled primarily by regulation of HisG enzymatic activity. This chain is ATP phosphoribosyltransferase, found in Mycobacterium sp. (strain JLS).